Reading from the N-terminus, the 413-residue chain is ORC1-type DNA replication protein 2 (413 aa).

ATP is bound by residues 70–74 (TGKTA), Tyr217, and Arg229.

It belongs to the CDC6/cdc18 family. Monomer. Interacts with Cdc6-3, MCM and PolB1. Autophosphorylated in vitro.

Involved in regulation of DNA replication. May play essential roles in origin recognition and cell cycle control of replication. Binds both single-stranded and double-stranded DNA, with a preference for molecules that contain a bubble, a fork, or a tail. Has a weak ATPase activity. Stimulates the binding of the MCM helicase to the origin DNA, but strongly inhibits ATPase and DNA helicase activities of MCM. Also regulates the DNA polymerase and the nuclease activities of PolB1. In Saccharolobus solfataricus (strain ATCC 35092 / DSM 1617 / JCM 11322 / P2) (Sulfolobus solfataricus), this protein is ORC1-type DNA replication protein 2 (cdc6-2).